The primary structure comprises 300 residues: uncharacterized protein (300 aa).

The segment covering 1–19 has biased composition (basic and acidic residues); the sequence is MATKRAHPEDETHESKRAA. The interval 1–20 is disordered; that stretch reads MATKRAHPEDETHESKRAAQ.

This is an uncharacterized protein from Orgyia pseudotsugata multicapsid polyhedrosis virus (OpMNPV).